We begin with the raw amino-acid sequence, 1067 residues long: Kinesin-like protein KIF11 (1067 aa).

Positions 18 to 359 (NIQVVVRCRP…LEYANRAKNI (342 aa)) constitute a Kinesin motor domain. Residue 105–112 (GQTGTGKT) participates in ATP binding. Residues 365-480 (VNQKLTKRAL…SKEQLAQEAF (116 aa)) adopt a coiled-coil conformation. A Phosphothreonine; by CDK1 modification is found at T937. S1046 is modified (phosphoserine; by NEK6). The segment at 1048 to 1067 (IMDEAEQSLPKSKLPLRMQN) is disordered.

The protein belongs to the TRAFAC class myosin-kinesin ATPase superfamily. Kinesin family. BimC subfamily. Heterotetramer of two heavy and two light chains. Interacts with aurka. In terms of processing, phosphorylation of Thr-937 during mitosis controls the association of this protein with the spindle apparatus. A subset of this protein primarily localized at the spindle pole is phosphorylated by NEK6 during mitosis. Post-translationally, phosphorylated on a serine residue by aurka.

It is found in the cytoplasm. Its subcellular location is the cytoskeleton. The protein localises to the spindle pole. Functionally, plus end-directed motor protein required for establishing a bipolar spindle. Associates with both interphase and mitotic spindle microtubules. May be involved in nuclear divisions taking place during the development of unfertilized eggs. Required in non-mitotic cells for transport of secretory proteins from the Golgi complex to the cell surface. In Xenopus tropicalis (Western clawed frog), this protein is Kinesin-like protein KIF11.